Consider the following 371-residue polypeptide: 4-hydroxybenzoate polyprenyltransferase, mitochondrial (371 aa).

The transit peptide at 1 to 45 directs the protein to the mitochondrion; sequence MLGSCGAGLVRGLRAETQAWLWGTRGRSLALVHAARGLHAANWQP. Over 46 to 83 the chain is Mitochondrial matrix; that stretch reads SPGQGPRGRPLSLSAAAVVNSAPRPLQPYLRLMRLDKP. A helical transmembrane segment spans residues 84 to 104; it reads IGTWLLYLPCTWSIGLAADPG. The Mitochondrial intermembrane portion of the chain corresponds to 105–108; that stretch reads CLPD. A helical transmembrane segment spans residues 109 to 129; the sequence is WYMLSLFGTGAVLMRGAGCTI. Residues 130–171 lie on the Mitochondrial matrix side of the membrane; that stretch reads NDMWDRDYDKKVTRTASRPIAAGDISTFRSFVFLGGQLTLAL. Residues 172–192 traverse the membrane as a helical segment; sequence GVLLCLNYYSIALGAASLLLV. The Mitochondrial intermembrane segment spans residues 193–200; the sequence is TTYPLMKR. A helical transmembrane segment spans residues 201-221; the sequence is ITYWPQLALGLTFNWGALLGW. Residues 222 to 231 are Mitochondrial matrix-facing; the sequence is SAVKGSCDPS. The chain crosses the membrane as a helical span at residues 232–252; sequence VCLPLYFSGIMWTLIYDTIYA. Residues 253–277 are Mitochondrial intermembrane-facing; sequence HQDKKDDALIGLKSTALLFREDTKK. A helical transmembrane segment spans residues 278–298; it reads WLSGFSVAMLGALSLVGVNSG. Over 299 to 300 the chain is Mitochondrial matrix; that stretch reads QT. Residues 301–321 traverse the membrane as a helical segment; it reads MPYYTALAAVGAHLAHQIYTL. Residues 322–332 lie on the Mitochondrial intermembrane side of the membrane; that stretch reads DINRPEDCWEK. The chain crosses the membrane as a helical span at residues 333–353; sequence FTSNRTIGLIIFLGIVLGNLC. At 354-371 the chain is on the mitochondrial matrix side; that stretch reads KAKETDKTRKNIENRMEN.

Belongs to the UbiA prenyltransferase family. Mg(2+) is required as a cofactor.

It is found in the mitochondrion inner membrane. The enzyme catalyses an all-trans-polyprenyl diphosphate + 4-hydroxybenzoate = a 4-hydroxy-3-(all-trans-polyprenyl)benzoate + diphosphate. It carries out the reaction all-trans-decaprenyl diphosphate + 4-hydroxybenzoate = 4-hydroxy-3-(all-trans-decaprenyl)benzoate + diphosphate. The catalysed reaction is all-trans-nonaprenyl diphosphate + 4-hydroxybenzoate = 4-hydroxy-3-(all-trans-nonaprenyl)benzoate + diphosphate. The protein operates within cofactor biosynthesis; ubiquinone biosynthesis. Its function is as follows. Mediates the second step in the final reaction sequence of coenzyme Q (CoQ) biosynthesis. Catalyzes the prenylation of para-hydroxybenzoate (PHB) with an all-trans polyprenyl donor (such as all-trans-decaprenyl diphosphate). The length of the polyprenyl side chain varies depending on the species, in humans, the side chain is comprised of 10 isoprenyls (decaprenyl) producing CoQ10 (also known as ubiquinone), whereas rodents predominantly generate CoQ9. However, this specificity is not complete, human tissues have low amounts of CoQ9 and rodent organs contain some CoQ10. Plays a central role in the biosynthesis of CoQ10. CoQ10 is a vital molecule that transports electrons from mitochondrial respiratory chain complexes. CoQs also function as cofactors for uncoupling protein and play a role as regulators of the extracellularly-induced ceramide-dependent apoptotic pathway. Regulates mitochondrial permeability transition pore (mPTP) opening and ROS production (pivotal events in cell death) in a tissue specific manner. This is 4-hydroxybenzoate polyprenyltransferase, mitochondrial from Bos taurus (Bovine).